Reading from the N-terminus, the 164-residue chain is MEMTNAQRLILSNQYKMMTMLDPTNAERYRRLQTIIERGYGLQMRELDREFGELKEETCRTIIDIMEMYHALHVSWTNLKDAQTIDERRVTFLGFDAATEARYLGYVRFMVNVEGRYTHFDAGTHGFNAQTPMWEKYQRMLNVWHSCPRQYHLSSNEINQIINA.

This sequence belongs to the UPF0304 family.

The chain is UPF0304 protein CKO_00501 from Citrobacter koseri (strain ATCC BAA-895 / CDC 4225-83 / SGSC4696).